The chain runs to 75 residues: MAVEKFETALKKLEDVVKKLEGGELSLEESLKAFEEGVKFSAFCSKKLNEAERRVETLVKQRDGSFVTKPFEEEE.

Belongs to the XseB family. In terms of assembly, heterooligomer composed of large and small subunits.

It localises to the cytoplasm. It catalyses the reaction Exonucleolytic cleavage in either 5'- to 3'- or 3'- to 5'-direction to yield nucleoside 5'-phosphates.. In terms of biological role, bidirectionally degrades single-stranded DNA into large acid-insoluble oligonucleotides, which are then degraded further into small acid-soluble oligonucleotides. This Citrifermentans bemidjiense (strain ATCC BAA-1014 / DSM 16622 / JCM 12645 / Bem) (Geobacter bemidjiensis) protein is Exodeoxyribonuclease 7 small subunit.